We begin with the raw amino-acid sequence, 522 residues long: E3 ubiquitin-protein ligase DMA2 (522 aa).

Disordered regions lie at residues 1-56 (MYTP…RPAS) and 69-92 (QNSQ…PSNS). The span at 14–35 (APTSSMTSNSSSASNANTTSSS) shows a compositional bias: low complexity. Positions 36-49 (GINPRNRASGTPSN) are enriched in polar residues. Ser-206 is modified (phosphoserine). Residues Lys-211, Lys-256, Lys-258, Lys-288, Lys-310, Lys-333, Lys-343, Lys-346, Lys-366, Lys-406, Lys-412, and Lys-423 each participate in a glycyl lysine isopeptide (Lys-Gly) (interchain with G-Cter in ubiquitin) cross-link. The 64-residue stretch at 295 to 358 (LVIGRYTERV…SGTFLNHQRL (64 aa)) folds into the FHA domain. The segment at 433–477 (CSICLCKIKPCQAIFISPCAHSWHFRCVRRLVMLSYPQFVCPNCR) adopts an RING-type; atypical zinc-finger fold.

It belongs to the DMA1 family. In terms of processing, UBC4-dependent autoubiquitination occurs at Lys-211, Lys-258, Lys-288, Lys-310, Lys-333, Lys-343, Lys-346, Lys-366, Lys-406, Lys-412 and Lys-423. UBC13/MMS2-dependent autoubiquitination occurs at Lys-258, Lys-310, Lys-346 and Lys-366. Lys-211, Lys-256, Lys-288, Lys-310, Lys-343, Lys-258, Lys-366 and Lys-412 are also ubiquitinated in trans by DMA1 E3 ligase in association with UBC4.

It localises to the cytoplasm. The enzyme catalyses S-ubiquitinyl-[E2 ubiquitin-conjugating enzyme]-L-cysteine + [acceptor protein]-L-lysine = [E2 ubiquitin-conjugating enzyme]-L-cysteine + N(6)-ubiquitinyl-[acceptor protein]-L-lysine.. In terms of biological role, E3 ubiquitin-protein ligase which functions in cell cycle retarding in conjunction with the UBC4 and UBC13/MMS2 complex, 2 E2 ubiquitin conjugating enzymes. Involved in nutritional control of the cell cycle. Required for proper spindle positioning, likely regulating septin ring deposition at the bud neck. This chain is E3 ubiquitin-protein ligase DMA2 (DMA2), found in Saccharomyces cerevisiae (strain YJM789) (Baker's yeast).